The sequence spans 362 residues: Phosphoserine aminotransferase (362 aa).

Position 43 (R43) interacts with L-glutamate. Residues A77–R78, W103, T153, D173, and Q196 contribute to the pyridoxal 5'-phosphate site. N6-(pyridoxal phosphate)lysine is present on K197.

This sequence belongs to the class-V pyridoxal-phosphate-dependent aminotransferase family. SerC subfamily. Homodimer. Pyridoxal 5'-phosphate serves as cofactor.

It localises to the cytoplasm. It carries out the reaction O-phospho-L-serine + 2-oxoglutarate = 3-phosphooxypyruvate + L-glutamate. The catalysed reaction is 4-(phosphooxy)-L-threonine + 2-oxoglutarate = (R)-3-hydroxy-2-oxo-4-phosphooxybutanoate + L-glutamate. Its pathway is amino-acid biosynthesis; L-serine biosynthesis; L-serine from 3-phospho-D-glycerate: step 2/3. It functions in the pathway cofactor biosynthesis; pyridoxine 5'-phosphate biosynthesis; pyridoxine 5'-phosphate from D-erythrose 4-phosphate: step 3/5. Catalyzes the reversible conversion of 3-phosphohydroxypyruvate to phosphoserine and of 3-hydroxy-2-oxo-4-phosphonooxybutanoate to phosphohydroxythreonine. The chain is Phosphoserine aminotransferase from Legionella pneumophila (strain Lens).